Here is a 1312-residue protein sequence, read N- to C-terminus: Rho GTPase-activating protein gacG (1312 aa).

6 disordered regions span residues 52–74 (VENN…KRSQ), 111–158 (SNNN…SSSD), 314–519 (ISSS…PRNF), 762–831 (NSIS…SSTG), 1185–1230 (NNNN…SSSV), and 1282–1312 (TGTS…IVEE). Composition is skewed to low complexity over residues 53-67 (ENNN…NSEN) and 111-146 (SNNN…YSPR). Polar residues predominate over residues 147-158 (NNNNNFTESSSD). Composition is skewed to low complexity over residues 328–355 (TTAA…ANNS), 373–397 (HHSS…IGNS), and 414–436 (LNLT…NNGN). Positions 437–449 (EVIQSSSSTSSPR) are enriched in polar residues. A compositionally biased stretch (low complexity) spans 479–507 (SSTNSLNNSTSSLKSSNNNILQQQQQQQQ). 2 stretches are compositionally biased toward polar residues: residues 508 to 518 (HYDSAPTTPRN) and 763 to 776 (SIST…GNIA). The span at 792–816 (NNNNNNNNNNNNNNNNNNNNNNNNN) shows a compositional bias: low complexity. One can recognise a Rho-GAP domain in the interval 1030–1212 (SKIDPITGFN…HHNSHHHRDN (183 aa)). A compositionally biased stretch (basic residues) spans 1196 to 1210 (HHHHHHHHHNSHHHR). Composition is skewed to low complexity over residues 1213 to 1222 (NNNNSNNNSS) and 1282 to 1305 (TGTS…RSPS).

Its subcellular location is the cytoplasm. Its function is as follows. Rho GTPase-activating protein involved in the signal transduction pathway. The polypeptide is Rho GTPase-activating protein gacG (gacG) (Dictyostelium discoideum (Social amoeba)).